The primary structure comprises 141 residues: Hemoglobin subunit alpha (141 aa).

In terms of domain architecture, Globin spans 1–141 (VLSPADKSNV…VSTVLTSKYR (141 aa)). Position 3 is a phosphoserine (Ser-3). Lys-7 and Lys-11 each carry N6-succinyllysine. Lys-16 carries the post-translational modification N6-acetyllysine; alternate. An N6-succinyllysine; alternate modification is found at Lys-16. Phosphotyrosine is present on Tyr-24. At Ser-35 the chain carries Phosphoserine. The residue at position 40 (Lys-40) is an N6-succinyllysine. Position 49 is a phosphoserine (Ser-49). O2 is bound at residue His-58. Residue His-87 participates in heme b binding. Ser-102 carries the post-translational modification Phosphoserine. The residue at position 108 (Thr-108) is a Phosphothreonine. Ser-124 and Ser-131 each carry phosphoserine. 2 positions are modified to phosphothreonine: Thr-134 and Thr-137. A Phosphoserine modification is found at Ser-138.

Belongs to the globin family. As to quaternary structure, heterotetramer of two alpha chains and two beta chains. In terms of tissue distribution, red blood cells.

Involved in oxygen transport from the lung to the various peripheral tissues. Functionally, hemopressin acts as an antagonist peptide of the cannabinoid receptor CNR1. Hemopressin-binding efficiently blocks cannabinoid receptor CNR1 and subsequent signaling. In Mico argentatus (Silvery marmoset), this protein is Hemoglobin subunit alpha (HBA).